Here is a 316-residue protein sequence, read N- to C-terminus: tRNA dimethylallyltransferase (316 aa).

17 to 24 contacts ATP; sequence GPTASGKT. 19–24 contributes to the substrate binding site; that stretch reads TASGKT. 4 interaction with substrate tRNA regions span residues 42–45, 166–170, 247–252, and 280–287; these read DSAL, QRLSR, RCVGYR, and KRQITWLR.

It belongs to the IPP transferase family. In terms of assembly, monomer. Requires Mg(2+) as cofactor.

The catalysed reaction is adenosine(37) in tRNA + dimethylallyl diphosphate = N(6)-dimethylallyladenosine(37) in tRNA + diphosphate. Catalyzes the transfer of a dimethylallyl group onto the adenine at position 37 in tRNAs that read codons beginning with uridine, leading to the formation of N6-(dimethylallyl)adenosine (i(6)A). The protein is tRNA dimethylallyltransferase of Escherichia coli O6:K15:H31 (strain 536 / UPEC).